We begin with the raw amino-acid sequence, 242 residues long: Small ribosomal subunit protein uS2 (242 aa).

It belongs to the universal ribosomal protein uS2 family.

This chain is Small ribosomal subunit protein uS2, found in Shewanella sediminis (strain HAW-EB3).